The primary structure comprises 135 residues: Integration host factor subunit beta (135 aa).

Basic and acidic residues predominate over residues 83 to 92; sequence GKELRERVDR. The disordered stretch occupies residues 83–135; that stretch reads GKELRERVDRTVTQGGGMNGNGHAPHGKTGQSQLGSQSPASLHDDGQLNLVRS. Polar residues predominate over residues 111 to 122; that stretch reads TGQSQLGSQSPA.

It belongs to the bacterial histone-like protein family. In terms of assembly, heterodimer of an alpha and a beta chain.

In terms of biological role, this protein is one of the two subunits of integration host factor, a specific DNA-binding protein that functions in genetic recombination as well as in transcriptional and translational control. The protein is Integration host factor subunit beta of Cupriavidus metallidurans (strain ATCC 43123 / DSM 2839 / NBRC 102507 / CH34) (Ralstonia metallidurans).